The chain runs to 437 residues: tRNA modification GTPase MnmE (437 aa).

The (6S)-5-formyl-5,6,7,8-tetrahydrofolate site is built by Arg21, Glu80, and Arg120. The region spanning 218–361 (GFVVVLAGPP…LLDRVAAAAG (144 aa)) is the TrmE-type G domain. Asn228 is a binding site for K(+). Residues 228–233 (NAGKST), 247–253 (SPIPGTT), and 272–275 (DTAG) each bind GTP. Position 232 (Ser232) interacts with Mg(2+). K(+) is bound by residues Ser247, Ile249, and Thr252. Thr253 contributes to the Mg(2+) binding site. Lys437 provides a ligand contact to (6S)-5-formyl-5,6,7,8-tetrahydrofolate.

Belongs to the TRAFAC class TrmE-Era-EngA-EngB-Septin-like GTPase superfamily. TrmE GTPase family. In terms of assembly, homodimer. Heterotetramer of two MnmE and two MnmG subunits. Requires K(+) as cofactor.

It is found in the cytoplasm. Its function is as follows. Exhibits a very high intrinsic GTPase hydrolysis rate. Involved in the addition of a carboxymethylaminomethyl (cmnm) group at the wobble position (U34) of certain tRNAs, forming tRNA-cmnm(5)s(2)U34. The sequence is that of tRNA modification GTPase MnmE from Methylobacterium sp. (strain 4-46).